The following is a 175-amino-acid chain: Pancreatic beta cell growth factor (175 aa).

Positions 1-26 (MMLPMTLCRMSWMLLSCLMFLSWVEG) are cleaved as a signal peptide. A C-type lectin domain is found at 38–175 (ITCPQGSVAY…ELPYICKFKV (138 aa)). 3 disulfides stabilise this stretch: Cys40-Cys51, Cys68-Cys171, and Cys146-Cys163.

As to expression, expressed only in CW animals pancreas and to a lesser extent in duodenum. In pancreas it is found in acinar cells, but not in islets.

The protein resides in the secreted. Functionally, constituent of ilotropin, which is a partially purified preparation of cellophane wrapping (CW) pancreata. Capable of initiating duct cell proliferation, a prerequisite for islet neogenesis. The chain is Pancreatic beta cell growth factor (INGAP) from Mesocricetus auratus (Golden hamster).